The sequence spans 242 residues: 1-(5-phosphoribosyl)-5-[(5-phosphoribosylamino)methylideneamino] imidazole-4-carboxamide isomerase (242 aa).

The active-site Proton acceptor is the Asp-8. Asp-130 serves as the catalytic Proton donor.

Belongs to the HisA/HisF family.

The protein localises to the cytoplasm. The enzyme catalyses 1-(5-phospho-beta-D-ribosyl)-5-[(5-phospho-beta-D-ribosylamino)methylideneamino]imidazole-4-carboxamide = 5-[(5-phospho-1-deoxy-D-ribulos-1-ylimino)methylamino]-1-(5-phospho-beta-D-ribosyl)imidazole-4-carboxamide. Its pathway is amino-acid biosynthesis; L-histidine biosynthesis; L-histidine from 5-phospho-alpha-D-ribose 1-diphosphate: step 4/9. This chain is 1-(5-phosphoribosyl)-5-[(5-phosphoribosylamino)methylideneamino] imidazole-4-carboxamide isomerase, found in Thioalkalivibrio sulfidiphilus (strain HL-EbGR7).